Here is a 217-residue protein sequence, read N- to C-terminus: MSSLSESAILVRDALVARGLETPMKENGVSREEKKERIEEHMREILTLLSLDLSDDSLEETPHRIAKMYVDEIFSGLDYANFPKITVIENKMNCDEMVRVNDITLTSTCEHHLVTIDGKATVAYIPRGKIIGLSKINRIVRFFAQRPQVQERMTQQILVALQTLLGSDDVAITMEATHYCVKSRGVMDATSSTTTTALGGIFKRNPATRHEFLSGIR.

The Zn(2+) site is built by cysteine 109, histidine 112, and cysteine 180.

This sequence belongs to the GTP cyclohydrolase I family. Toroid-shaped homodecamer, composed of two pentamers of five dimers.

It catalyses the reaction GTP + H2O = 7,8-dihydroneopterin 3'-triphosphate + formate + H(+). It participates in cofactor biosynthesis; 7,8-dihydroneopterin triphosphate biosynthesis; 7,8-dihydroneopterin triphosphate from GTP: step 1/1. The chain is GTP cyclohydrolase 1 from Aliivibrio fischeri (strain ATCC 700601 / ES114) (Vibrio fischeri).